A 102-amino-acid chain; its full sequence is NADH-quinone oxidoreductase subunit K (102 aa).

Helical transmembrane passes span 6 to 26, 30 to 50, and 62 to 82; these read LEHGLIVATILFALGFYGVMV, LLFMLMSLEIMMNAAALAFVL, and VMFILILTLAAAEACIGLAIV.

Belongs to the complex I subunit 4L family. As to quaternary structure, NDH-1 is composed of 14 different subunits. Subunits NuoA, H, J, K, L, M, N constitute the membrane sector of the complex.

Its subcellular location is the cell inner membrane. It carries out the reaction a quinone + NADH + 5 H(+)(in) = a quinol + NAD(+) + 4 H(+)(out). Its function is as follows. NDH-1 shuttles electrons from NADH, via FMN and iron-sulfur (Fe-S) centers, to quinones in the respiratory chain. The immediate electron acceptor for the enzyme in this species is believed to be ubiquinone. Couples the redox reaction to proton translocation (for every two electrons transferred, four hydrogen ions are translocated across the cytoplasmic membrane), and thus conserves the redox energy in a proton gradient. The sequence is that of NADH-quinone oxidoreductase subunit K from Acinetobacter baumannii (strain AB307-0294).